Consider the following 371-residue polypeptide: Putative glutamate--cysteine ligase 2 (371 aa).

Belongs to the glutamate--cysteine ligase type 2 family. YbdK subfamily.

The enzyme catalyses L-cysteine + L-glutamate + ATP = gamma-L-glutamyl-L-cysteine + ADP + phosphate + H(+). Functionally, ATP-dependent carboxylate-amine ligase which exhibits weak glutamate--cysteine ligase activity. This chain is Putative glutamate--cysteine ligase 2, found in Paraburkholderia xenovorans (strain LB400).